Here is a 463-residue protein sequence, read N- to C-terminus: Fumarate hydratase class II (463 aa).

Residues 98–100 (SGT), 129–132 (HPND), 139–141 (SSN), and Thr187 each bind substrate. The disordered stretch occupies residues 121–141 (KKGGKSPVHPNDHVNKGQSSN). His188 serves as the catalytic Proton donor/acceptor. Residue Ser318 is part of the active site. Residues Ser319 and 324–326 (KVN) contribute to the substrate site.

It belongs to the class-II fumarase/aspartase family. Fumarase subfamily. As to quaternary structure, homotetramer.

The protein resides in the cytoplasm. It carries out the reaction (S)-malate = fumarate + H2O. The protein operates within carbohydrate metabolism; tricarboxylic acid cycle; (S)-malate from fumarate: step 1/1. Its function is as follows. Involved in the TCA cycle. Catalyzes the stereospecific interconversion of fumarate to L-malate. This Rickettsia conorii (strain ATCC VR-613 / Malish 7) protein is Fumarate hydratase class II.